Consider the following 345-residue polypeptide: Ferrochelatase (345 aa).

H215 and E296 together coordinate Fe cation.

It belongs to the ferrochelatase family.

The protein resides in the cytoplasm. It catalyses the reaction heme b + 2 H(+) = protoporphyrin IX + Fe(2+). It functions in the pathway porphyrin-containing compound metabolism; protoheme biosynthesis; protoheme from protoporphyrin-IX: step 1/1. Functionally, catalyzes the ferrous insertion into protoporphyrin IX. The chain is Ferrochelatase from Nitrobacter hamburgensis (strain DSM 10229 / NCIMB 13809 / X14).